The primary structure comprises 213 residues: Redox-sensing transcriptional repressor Rex (213 aa).

A DNA-binding region (H-T-H motif) is located at residues 16-55 (VYSRFLERMDRNGIVTVSSGEIAEGVGVSSAQVRKDLAYF). 90–95 (GAGNLG) is a binding site for NAD(+).

Belongs to the transcriptional regulatory Rex family. In terms of assembly, homodimer.

Its subcellular location is the cytoplasm. In terms of biological role, modulates transcription in response to changes in cellular NADH/NAD(+) redox state. In Pelotomaculum thermopropionicum (strain DSM 13744 / JCM 10971 / SI), this protein is Redox-sensing transcriptional repressor Rex.